We begin with the raw amino-acid sequence, 403 residues long: MDTKAFKRSLNHSENYYRQGFGHKDEVAGMMTSEYQSSLIQEIRDNNYELTRGDVTIYLAEAFGFCWGVERAVAMAYETRKHFPTEKIWVTNEIIHNPSVNNRLKEMNVHFIEVVDGDKDFSGVANGDVVILPAFGATVQEMQLLNDRGCTIVDTTCPWVSKVWNSVEKHKKKNYTSIIHGKYKHEETVATSSFAGTYLVLLNLEEAEYVRNYILHGGDRQTFLDKFKNAYSEGFDPDKDLDRVGVANQTTMLKSETEQMGKLFEQTMLEKFGPTEINDHFMSFNTICDATQERQDAMFDLVEKDLDLMVVIGGFNSSNTTHLQEIAVERNIPSYHIDSGDRLLGNNVIAHKPLDGEITTQTHWLPAGKLKIGVTSGASTPDKVVEDVIAKIFAEKAQPAALV.

C66 lines the [4Fe-4S] cluster pocket. Position 96 (H96) interacts with (2E)-4-hydroxy-3-methylbut-2-enyl diphosphate. H96 is a dimethylallyl diphosphate binding site. H96 lines the isopentenyl diphosphate pocket. C157 provides a ligand contact to [4Fe-4S] cluster. H185 provides a ligand contact to (2E)-4-hydroxy-3-methylbut-2-enyl diphosphate. Position 185 (H185) interacts with dimethylallyl diphosphate. H185 lines the isopentenyl diphosphate pocket. E187 (proton donor) is an active-site residue. T250 contributes to the (2E)-4-hydroxy-3-methylbut-2-enyl diphosphate binding site. Position 288 (C288) interacts with [4Fe-4S] cluster. (2E)-4-hydroxy-3-methylbut-2-enyl diphosphate contacts are provided by S317, S318, N319, and S379. S317, S318, N319, and S379 together coordinate dimethylallyl diphosphate. Isopentenyl diphosphate is bound by residues S317, S318, N319, and S379.

The protein belongs to the IspH family. It depends on [4Fe-4S] cluster as a cofactor.

It carries out the reaction isopentenyl diphosphate + 2 oxidized [2Fe-2S]-[ferredoxin] + H2O = (2E)-4-hydroxy-3-methylbut-2-enyl diphosphate + 2 reduced [2Fe-2S]-[ferredoxin] + 2 H(+). It catalyses the reaction dimethylallyl diphosphate + 2 oxidized [2Fe-2S]-[ferredoxin] + H2O = (2E)-4-hydroxy-3-methylbut-2-enyl diphosphate + 2 reduced [2Fe-2S]-[ferredoxin] + 2 H(+). The protein operates within isoprenoid biosynthesis; dimethylallyl diphosphate biosynthesis; dimethylallyl diphosphate from (2E)-4-hydroxy-3-methylbutenyl diphosphate: step 1/1. It participates in isoprenoid biosynthesis; isopentenyl diphosphate biosynthesis via DXP pathway; isopentenyl diphosphate from 1-deoxy-D-xylulose 5-phosphate: step 6/6. In terms of biological role, catalyzes the conversion of 1-hydroxy-2-methyl-2-(E)-butenyl 4-diphosphate (HMBPP) into a mixture of isopentenyl diphosphate (IPP) and dimethylallyl diphosphate (DMAPP). Acts in the terminal step of the DOXP/MEP pathway for isoprenoid precursor biosynthesis. This is 4-hydroxy-3-methylbut-2-enyl diphosphate reductase from Picosynechococcus sp. (strain ATCC 27264 / PCC 7002 / PR-6) (Agmenellum quadruplicatum).